The chain runs to 447 residues: Acidic leucine-rich nuclear phosphoprotein 32-related protein (447 aa).

LRR repeat units follow at residues asparagine 49 to glycine 70, asparagine 71 to valine 90, and serine 96 to alanine 117. In terms of domain architecture, LRRCT spans cysteine 129 to glutamate 167. The disordered stretch occupies residues aspartate 155 to arginine 447. Acidic residues-rich tracts occupy residues glutamate 163–glycine 194 and valine 215–glutamate 231. Positions glutamine 232–arginine 242 are enriched in polar residues. 5 stretches are compositionally biased toward acidic residues: residues valine 256–valine 277, glutamate 284–aspartate 309, glycine 336–glycine 374, proline 397–proline 415, and aspartate 433–arginine 447.

This sequence belongs to the ANP32 family.

In Arabidopsis thaliana (Mouse-ear cress), this protein is Acidic leucine-rich nuclear phosphoprotein 32-related protein.